The following is a 1065-amino-acid chain: Cellulose synthase A catalytic subunit 3 [UDP-forming] (1065 aa).

Over 1 to 260 the chain is Cytoplasmic; it reads MESEGETAGK…PSSRINPYRM (260 aa). S3 bears the Phosphoserine mark. Residues C20, C23, C39, C42, C47, C50, C62, and C65 each contribute to the Zn(2+) site. The RING-type; degenerate zinc-finger motif lies at 20-66; that stretch reads CQICSDNVGKTVDGDRFVACDICSFPVCRPCYEYERKDGNQSCPQCK. Phosphoserine occurs at positions 151, 211, and 216. The chain crosses the membrane as a helical span at residues 261–281; it reads VIMLRLVILCLFLHYRITNPV. Residues 282–283 lie on the Extracellular side of the membrane; sequence PN. Residues 284–304 traverse the membrane as a helical segment; that stretch reads AFALWLVSVICEIWFALSWIL. The Cytoplasmic portion of the chain corresponds to 305–842; it reads DQFPKWFPVN…LERFAYVNTT (538 aa). UDP-alpha-D-glucose contacts are provided by S343, K349, E350, and D379. The active site involves D379. Residues 433–457 are a coiled coil; the sequence is VKDRRAMKREYEEFKIRINALVSKA. K520 lines the UDP-alpha-D-glucose pocket. Mn(2+)-binding residues include K521 and D545. The disordered stretch occupies residues 643-672; that stretch reads SKLCGGSRKKNSKAKKESDKKKSGRHTDST. Residues 656–670 are compositionally biased toward basic and acidic residues; sequence AKKESDKKKSGRHTD. D765 is a catalytic residue. A helical transmembrane segment spans residues 843–863; that stretch reads IYPITSIPLLMYCTLPAVCLF. The Extracellular segment spans residues 864–874; it reads TNQFIIPQISN. Residues 875 to 895 traverse the membrane as a helical segment; sequence IASIWFLSLFLSIFATGILEM. Residues 896 to 910 are Cytoplasmic-facing; that stretch reads RWSGVGIDEWWRNEQ. The helical transmembrane segment at 911–931 threads the bilayer; it reads FWVIGGVSAHLFAVFQGILKV. Residues 932–961 lie on the Extracellular side of the membrane; that stretch reads LAGIDTNFTVTSKASDEDGDFAELYLFKWT. A glycan (N-linked (GlcNAc...) asparagine) is linked at N938. The chain crosses the membrane as a helical span at residues 962–982; sequence TLLIPPTTLLIVNLVGVVAGV. Topologically, residues 983 to 993 are cytoplasmic; sequence SYAINSGYQSW. Residues 994-1014 form a helical membrane-spanning segment; that stretch reads GPLFGKLFFAFWVIVHLYPFL. At 1015 to 1023 the chain is on the extracellular side; sequence KGLMGRQNR. Residues 1024–1044 traverse the membrane as a helical segment; the sequence is TPTIVVVWSVLLASIFSLLWV. The Cytoplasmic segment spans residues 1045–1065; sequence RIDPFTSRVTGPDILECGINC.

This sequence belongs to the glycosyltransferase 2 family. Plant cellulose synthase subfamily. In terms of assembly, homodimer. Interacts with CESA1 and CESA6. Interacts with STL1 and STL2, but not with GOT1. Binds to CSI1 and CSI3. Interacts with PAT24/TIP1. Zn(2+) is required as a cofactor. It depends on Mn(2+) as a cofactor. Palmitoylated, in part by PAT24/TIP1. As to expression, expressed in young plants, flowers and roots, and to a lower extent in leaves and stems. Localized in all cells except meristematic cells. Accumulates particularly in root caps, root hairs, epidermal layer, midveins of leaves and anthers. Not present in old tissues.

It is found in the cell membrane. The protein localises to the golgi apparatus membrane. It catalyses the reaction [(1-&gt;4)-beta-D-glucosyl](n) + UDP-alpha-D-glucose = [(1-&gt;4)-beta-D-glucosyl](n+1) + UDP + H(+). It functions in the pathway glycan metabolism; plant cellulose biosynthesis. Catalytic subunit of cellulose synthase terminal complexes ('rosettes'), required for beta-1,4-glucan microfibril crystallization, a major mechanism of the cell wall formation. Involved in the primary cell wall formation, especially in roots. This is Cellulose synthase A catalytic subunit 3 [UDP-forming] from Arabidopsis thaliana (Mouse-ear cress).